The chain runs to 267 residues: Neural/ectodermal development factor IMP-L2 (267 aa).

Residues 1–25 form the signal peptide; sequence MEAKMNLHVCALALLLFGSIATVRG. 2 consecutive Ig-like C2-type domains span residues 48-149 and 174-260; these read PRNR…KTIY and PRII…TFVY. Disulfide bonds link Cys-80–Cys-139 and Cys-195–Cys-244.

As to expression, detected in several sites including the ventral neuroectoderm, the tracheal pits, the pharynx and esophagus, and specific neuronal cell bodies, where it is primarily expressed.

The protein resides in the secreted. It localises to the extracellular space. In terms of biological role, essential developmental role during embryogenesis, in particular the normal development of the nervous system. May be involved in some aspect of cell adhesion. This Drosophila melanogaster (Fruit fly) protein is Neural/ectodermal development factor IMP-L2 (ImpL2).